The following is a 166-amino-acid chain: Arginine repressor (166 aa).

The protein belongs to the ArgR family.

It is found in the cytoplasm. The protein operates within amino-acid biosynthesis; L-arginine biosynthesis [regulation]. Its function is as follows. Regulates arginine biosynthesis genes. This Mycobacterium ulcerans (strain Agy99) protein is Arginine repressor.